The sequence spans 465 residues: Ran-binding protein 3-like (465 aa).

Residues 276 to 417 enclose the RanBD1 domain; that stretch reads SQPSRKCLLE…ALQSFNKQRD (142 aa).

Interacts with SMAD1, SMAD5 and SMAD8; the interaction (with SMAD at least) increases when SMAD1 is not phosphorylated and mediates SMAD1 nuclear export.

It localises to the nucleus. Its subcellular location is the cytoplasm. Nuclear export factor for BMP-specific SMAD1/5/8 that plays a critical role in terminating BMP signaling and regulating mesenchymal stem cell differentiation by blocking osteoblast differentiation to promote myogenic differention. Directly recognizes dephosphorylated SMAD1/5/8 and mediates their nuclear export in a Ran-dependent manner. The chain is Ran-binding protein 3-like (RANBP3L) from Homo sapiens (Human).